The chain runs to 189 residues: UPF0232 protein MLBr00004 (189 aa).

Residues 59–78 are disordered; that stretch reads TDRRRNWSGPGPDVRDPQPL.

This sequence belongs to the UPF0232 family.

In Mycobacterium leprae (strain Br4923), this protein is UPF0232 protein MLBr00004.